The following is a 385-amino-acid chain: Cytochrome b (385 aa).

4 consecutive transmembrane segments (helical) span residues 32–52, 76–98, 113–133, and 179–199; these read FGSL…TLAM, WLIR…LHIG, AWIL…LGYV, and FFAL…MHLI. Positions 82 and 96 each coordinate heme b. Heme b-binding residues include H183 and H197. H202 contributes to the a ubiquinone binding site. 4 consecutive transmembrane segments (helical) span residues 226–246, 290–310, 322–342, and 349–369; these read YLFK…IFVF, LLGV…PKTD, LSKI…QLGA, and FIEF…IIMP.

This sequence belongs to the cytochrome b family. In terms of assembly, fungal cytochrome b-c1 complex contains 10 subunits; 3 respiratory subunits, 2 core proteins and 5 low-molecular weight proteins. Cytochrome b-c1 complex is a homodimer. Heme b serves as cofactor.

Its subcellular location is the mitochondrion inner membrane. Functionally, component of the ubiquinol-cytochrome c reductase complex (complex III or cytochrome b-c1 complex) that is part of the mitochondrial respiratory chain. The b-c1 complex mediates electron transfer from ubiquinol to cytochrome c. Contributes to the generation of a proton gradient across the mitochondrial membrane that is then used for ATP synthesis. This is Cytochrome b (cob) from Akanthomyces muscarius (Entomopathogenic fungus).